We begin with the raw amino-acid sequence, 465 residues long: Gamma-aminobutyric acid receptor subunit gamma-1 (465 aa).

The N-terminal stretch at 1 to 20 is a signal peptide; that stretch reads MGSGKAFLFSPSLLWSQTRG. The Extracellular segment spans residues 21–273; sequence VRLIFLLLTL…FDLSRRMGYF (253 aa). Residues Asn-50 and Asn-127 are each glycosylated (N-linked (GlcNAc...) asparagine). An intrachain disulfide couples Cys-188 to Cys-202. Asn-245 carries an N-linked (GlcNAc...) asparagine glycan. Residues 274–294 traverse the membrane as a helical segment; it reads TIQTYIPCILTVVLSWVSFWI. At 295–300 the chain is on the cytoplasmic side; it reads NKDAVP. The chain crosses the membrane as a helical span at residues 301-320; sequence ARTSLGITTVLTMTTLSTIA. Over 321–328 the chain is Extracellular; that stretch reads RKSLPKVS. A helical membrane pass occupies residues 329–349; it reads YVTAMDLFVSVCFIFVFAALM. Over 350-444 the chain is Cytoplasmic; that stretch reads EYGTLHYFTS…RIAKIDSYSR (95 aa). The helical transmembrane segment at 445–465 threads the bilayer; that stretch reads IFFPTAFALFNLVYWVGYLYL.

This sequence belongs to the ligand-gated ion channel (TC 1.A.9) family. Gamma-aminobutyric acid receptor (TC 1.A.9.5) subfamily. GABRG1 sub-subfamily. In terms of assembly, heteropentamer, formed by a combination of alpha (GABRA1-6), beta (GABRB1-3), gamma (GABRG1-3), delta (GABRD), epsilon (GABRE), rho (GABRR1-3), pi (GABRP) and theta (GABRQ) chains, each subunit exhibiting distinct physiological and pharmacological properties. In terms of processing, may be palmitoylated. Expressed in brain.

Its subcellular location is the postsynaptic cell membrane. The protein localises to the cell membrane. The enzyme catalyses chloride(in) = chloride(out). Functionally, gamma subunit of the heteropentameric ligand-gated chloride channel gated by gamma-aminobutyric acid (GABA), a major inhibitory neurotransmitter in the brain. GABA-gated chloride channels, also named GABA(A) receptors (GABAAR), consist of five subunits arranged around a central pore and contain GABA active binding site(s) located at the alpha and beta subunit interface(s). When activated by GABA, GABAARs selectively allow the flow of chloride anions across the cell membrane down their electrochemical gradient. Chloride influx into the postsynaptic neuron following GABAAR opening decreases the neuron ability to generate a new action potential, thereby reducing nerve transmission. In Mus musculus (Mouse), this protein is Gamma-aminobutyric acid receptor subunit gamma-1.